The chain runs to 463 residues: tRNA-2-methylthio-N(6)-dimethylallyladenosine synthase (463 aa).

One can recognise an MTTase N-terminal domain in the interval 18 to 136 (RKLYIETYGC…LPNLVGAAEQ (119 aa)). [4Fe-4S] cluster contacts are provided by Cys27, Cys63, Cys100, Cys174, Cys178, and Cys181. In terms of domain architecture, Radical SAM core spans 160 to 392 (GGVHINGFVS…IALQNRLSEE (233 aa)). One can recognise a TRAM domain in the interval 395–458 (KRDIGKTFEV…SATLFGEVVE (64 aa)).

This sequence belongs to the methylthiotransferase family. MiaB subfamily. Monomer. [4Fe-4S] cluster serves as cofactor.

It localises to the cytoplasm. The catalysed reaction is N(6)-dimethylallyladenosine(37) in tRNA + (sulfur carrier)-SH + AH2 + 2 S-adenosyl-L-methionine = 2-methylsulfanyl-N(6)-dimethylallyladenosine(37) in tRNA + (sulfur carrier)-H + 5'-deoxyadenosine + L-methionine + A + S-adenosyl-L-homocysteine + 2 H(+). In terms of biological role, catalyzes the methylthiolation of N6-(dimethylallyl)adenosine (i(6)A), leading to the formation of 2-methylthio-N6-(dimethylallyl)adenosine (ms(2)i(6)A) at position 37 in tRNAs that read codons beginning with uridine. The protein is tRNA-2-methylthio-N(6)-dimethylallyladenosine synthase of Porphyromonas gingivalis (strain ATCC BAA-308 / W83).